The primary structure comprises 221 residues: MPGTSELITVAVPKGRLLQESSALFERALGVSPRKLLEGTRKLAADAPEAGLRFISIRAGDVASYVEHGAAEVGIVGLDVLREEPRDLYEPLDLGIGRCTVIVARPKGARPLPRGVAPRVATKYLSLAARHFAAKGVPAEIIPLHGSIEVAPSLGLADTIVDITETGETLRANGLVIEEKVLEVSARLVVNRVALKLHPERLRLLIEALRAAVAAADAEAR.

The protein belongs to the ATP phosphoribosyltransferase family. Short subfamily. Heteromultimer composed of HisG and HisZ subunits.

It localises to the cytoplasm. The enzyme catalyses 1-(5-phospho-beta-D-ribosyl)-ATP + diphosphate = 5-phospho-alpha-D-ribose 1-diphosphate + ATP. Its pathway is amino-acid biosynthesis; L-histidine biosynthesis; L-histidine from 5-phospho-alpha-D-ribose 1-diphosphate: step 1/9. Its function is as follows. Catalyzes the condensation of ATP and 5-phosphoribose 1-diphosphate to form N'-(5'-phosphoribosyl)-ATP (PR-ATP). Has a crucial role in the pathway because the rate of histidine biosynthesis seems to be controlled primarily by regulation of HisG enzymatic activity. The protein is ATP phosphoribosyltransferase of Anaeromyxobacter dehalogenans (strain 2CP-C).